Reading from the N-terminus, the 188-residue chain is MEIISLKRFILLTVATSSFLTSNTFCTDEFMMPHFHSKEGDGKYSQLRGIPKGEKERSVSFQELKDWGAKNVIKMSPAPANKVPHSAANLPLRFGRTIDEKRSPAARVNMEAGTRSHFPSLPQRFGRTTARSPKTPADLPQKPLHSLGSSELLYVMICQHQEIQSPGGKRTRRGAFVETDDAERKPEK.

A signal peptide spans 1 to 26 (MEIISLKRFILLTVATSSFLTSNTFC). A propeptide spanning residues 27–57 (TDEFMMPHFHSKEGDGKYSQLRGIPKGEKER) is cleaved from the precursor. Phe94 is modified (phenylalanine amide). A propeptide spanning residues 97–106 (TIDEKRSPAA) is cleaved from the precursor. 2 disordered regions span residues 116–144 (SHFPSLPQRFGRTTARSPKTPADLPQKPL) and 163–188 (IQSPGGKRTRRGAFVETDDAERKPEK). Phenylalanine amide is present on Phe125. A propeptide spanning residues 128-188 (TTARSPKTPA…TDDAERKPEK (61 aa)) is cleaved from the precursor.

Belongs to the FARP (FMRFamide related peptide) family.

The protein localises to the secreted. Its function is as follows. Efficiently inhibits forskolin-induced production of cAMP. Acts as a potent negative regulator of gonadotropin synthesis and secretion. Induces secretion of prolactin. Efficiently inhibits forskolin-induced production of cAMP. Blocks morphine-induced analgesia. In Mus musculus (Mouse), this protein is Pro-FMRFamide-related neuropeptide VF (Npvf).